Consider the following 446-residue polypeptide: Tubulin beta-1 chain (446 aa).

The short motif at 1–4 (MREI) is the MREI motif element. Positions 11, 69, 138, 142, 143, 144, 204, and 226 each coordinate GTP. Position 69 (Glu69) interacts with Mg(2+). The disordered stretch occupies residues 426–446 (QDATAEEEGEFEEEGEYEDGA). The segment covering 429-446 (TAEEEGEFEEEGEYEDGA) has biased composition (acidic residues). Residue Glu438 is modified to 5-glutamyl polyglutamate.

Belongs to the tubulin family. Dimer of alpha and beta chains. A typical microtubule is a hollow water-filled tube with an outer diameter of 25 nm and an inner diameter of 15 nM. Alpha-beta heterodimers associate head-to-tail to form protofilaments running lengthwise along the microtubule wall with the beta-tubulin subunit facing the microtubule plus end conferring a structural polarity. Microtubules usually have 13 protofilaments but different protofilament numbers can be found in some organisms and specialized cells. Requires Mg(2+) as cofactor. Some glutamate residues at the C-terminus are polyglycylated, resulting in polyglycine chains on the gamma-carboxyl group. Glycylation is mainly limited to tubulin incorporated into axonemes (cilia and flagella) whereas glutamylation is prevalent in neuronal cells, centrioles, axonemes, and the mitotic spindle. Both modifications can coexist on the same protein on adjacent residues, and lowering polyglycylation levels increases polyglutamylation, and reciprocally. The precise function of polyglycylation is still unclear. Post-translationally, some glutamate residues at the C-terminus are polyglutamylated, resulting in polyglutamate chains on the gamma-carboxyl group. Polyglutamylation plays a key role in microtubule severing by spastin (SPAST). SPAST preferentially recognizes and acts on microtubules decorated with short polyglutamate tails: severing activity by SPAST increases as the number of glutamates per tubulin rises from one to eight, but decreases beyond this glutamylation threshold. Brain.

It localises to the cytoplasm. The protein localises to the cytoskeleton. Tubulin is the major constituent of microtubules, a cylinder consisting of laterally associated linear protofilaments composed of alpha- and beta-tubulin heterodimers. Microtubules grow by the addition of GTP-tubulin dimers to the microtubule end, where a stabilizing cap forms. Below the cap, tubulin dimers are in GDP-bound state, owing to GTPase activity of alpha-tubulin. This chain is Tubulin beta-1 chain (tubb1), found in Notothenia neglecta (Yellowbelly rockcod).